A 338-amino-acid polypeptide reads, in one-letter code: Glyceraldehyde-3-phosphate dehydrogenase (338 aa).

NAD(+) is bound by residues 12–13, Asp-38, and Ser-125; that span reads RI. D-glyceraldehyde 3-phosphate is bound by residues 155–157, Thr-186, 216–217, and Arg-239; these read SCT and TG. Cys-156 functions as the Nucleophile in the catalytic mechanism. An NAD(+)-binding site is contributed by Asn-320.

It belongs to the glyceraldehyde-3-phosphate dehydrogenase family. As to quaternary structure, homotetramer.

The protein localises to the cytoplasm. It carries out the reaction D-glyceraldehyde 3-phosphate + phosphate + NAD(+) = (2R)-3-phospho-glyceroyl phosphate + NADH + H(+). It participates in carbohydrate degradation; glycolysis; pyruvate from D-glyceraldehyde 3-phosphate: step 1/5. In terms of biological role, catalyzes the oxidative phosphorylation of glyceraldehyde 3-phosphate (G3P) to 1,3-bisphosphoglycerate (BPG) using the cofactor NAD. The first reaction step involves the formation of a hemiacetal intermediate between G3P and a cysteine residue, and this hemiacetal intermediate is then oxidized to a thioester, with concomitant reduction of NAD to NADH. The reduced NADH is then exchanged with the second NAD, and the thioester is attacked by a nucleophilic inorganic phosphate to produce BPG. The sequence is that of Glyceraldehyde-3-phosphate dehydrogenase (gap) from Lactobacillus delbrueckii subsp. bulgaricus.